Consider the following 867-residue polypeptide: GATOR2 complex protein Mio (867 aa).

5 WD repeats span residues 51–86 (ANES…GICN), 100–144 (RQQR…PKET), 149–188 (GVGE…ATCQ), 190–228 (IQTK…SPLR), and 231–272 (QSSK…TDNS). Residues 350–376 (PASPTSTAATPTQQQPTSSCSTNSGSS) show a composition bias toward low complexity. The interval 350–378 (PASPTSTAATPTQQQPTSSCSTNSGSSLD) is disordered. Residues 739 to 777 (LSCNFCGKSVSNALLDEPRPRSTTTSTNRLSSCPSCRKP) form a C4-type zinc finger. Residues C741, C744, C771, C774, C784, C821, C824, H826, H829, H832, C843, C848, and C852 each contribute to the Zn(2+) site. The RING-type; atypical zinc-finger motif lies at 778 to 857 (LPRCSLCLMH…CNCRCFDMDG (80 aa)).

The protein belongs to the WD repeat mio family. Component of the GATOR complex consisting of mio, Nup44A/Seh1, Im11, Nplr3, Nplr2, Wdr24, Wdr59 and Sec13. Within the GATOR complex, probable component of the GATOR2 subcomplex which is likely composed of mio, Nup44A/Seh1, Wdr24, Wdr59 and Sec13. Interacts with Wdr24. Interacts with nucleoporin Nup44A/Seh1. The GATOR2 complex associates with unmet in the absence of S-adenosyl-L-methionine; the mio-Wdr24-Nup44A subcomplex is essential and sufficient for this interaction while Wdr59 and Sec13 are dispensable. This association acts as a nutrient sensor to inhibit mTORC1 signaling in the absence of methionine. As to expression, present in the oocyte.

The protein resides in the nucleus. The protein localises to the lysosome. Its function is as follows. An essential component of the GATOR subcomplex GATOR2 which functions as an activator of the amino acid-sensing branch of the mTORC1 signaling pathway. The two GATOR subcomplexes, GATOR1 and GATOR2, regulate the mTORC1 pathway in order to mediate metabolic homeostasis, female gametogenesis and the response to amino acid limitation and complete starvation. GATOR2 activates the mTORC1 signaling pathway through the inhibition of the GATOR1 subcomplex, controlling the switch to cell proliferation and growth under nutrient replete conditions and during female oocyte development. This component is required for activating mTORC1 specifically in germline cells to promote cell growth and maintain the oocyte fate. GATOR1 and GATOR2 act at different stages of oogenesis to regulate mTORC1 in order to control meiotic entry and promote oocyte growth and development. After exactly four mitotic cyst divisions, the GATOR1 complex members (Iml1, Nprl2 and Nprl3) down-regulate mTORC1 to slow cellular metabolism and promote the mitotic/meiotic transition. At later stages of oogenesis, the mio and Nup44A components of the GATOR2 complex inhibit GATOR1 and thus activate mTORC1 to promote meiotic progression, and drive oocyte growth and development. In addition to its role in the regulation of the mTORC1 complex, functions independently of mTORC1 to prevent the inappropriate accumulation of autolysosomes in germline tissues. In Drosophila melanogaster (Fruit fly), this protein is GATOR2 complex protein Mio.